A 225-amino-acid polypeptide reads, in one-letter code: UPF0758 protein Sbal223_0402 (225 aa).

In terms of domain architecture, MPN spans 102–224; sequence VLTNPDLTRD…IVSFAERGWI (123 aa). Zn(2+) is bound by residues His173, His175, and Asp186. The JAMM motif motif lies at 173–186; the sequence is HNHPSGIAEPSQAD.

The protein belongs to the UPF0758 family.

This chain is UPF0758 protein Sbal223_0402, found in Shewanella baltica (strain OS223).